A 290-amino-acid chain; its full sequence is MNFVIATRRSKLAQVQTEIIIDLLNKKHDIECEKLLIETVGDKILEVSLDKIGGKGLFVKDIEVAMLEQRADAAVHSMKDVPYEMPKGFEIIAIPEREDVRDAFISLDNIKFKDLRKGAKIGTSSRRRAAQLKLLRPDLDIVPIRGNVQTRIEKIKKENLDGIILAVAGLKRVNLDHLITDYFDTKEMVPAIGQGALGIEVMEEHPKKELFKDLDHYNSKICVLAERAFMRELDGDCHSTIGAYASIKDNIMHIIGIFERKNKIIKKEITGTKDQYEKLGISLAEHILKD.

At Cys237 the chain carries S-(dipyrrolylmethanemethyl)cysteine.

This sequence belongs to the HMBS family. As to quaternary structure, monomer. Dipyrromethane serves as cofactor.

The catalysed reaction is 4 porphobilinogen + H2O = hydroxymethylbilane + 4 NH4(+). Its pathway is porphyrin-containing compound metabolism; protoporphyrin-IX biosynthesis; coproporphyrinogen-III from 5-aminolevulinate: step 2/4. Tetrapolymerization of the monopyrrole PBG into the hydroxymethylbilane pre-uroporphyrinogen in several discrete steps. In Clostridium botulinum (strain Kyoto / Type A2), this protein is Porphobilinogen deaminase.